Reading from the N-terminus, the 145-residue chain is Photosystem I reaction center subunit VI-2, chloroplastic (145 aa).

A chloroplast-targeting transit peptide spans 1–50 (MASFATIAAVQPSAAVKGLGGSSLAGAKLFIKPSRQSFKTKSTRAGAVVA). A helical transmembrane segment spans residues 102–118 (LLLKFLILGGGSLLTYV). The tract at residues 126 to 145 (VLPIKRGPQEPPKLGPRGKL) is disordered.

It belongs to the psaH family.

Its subcellular location is the plastid. The protein resides in the chloroplast thylakoid membrane. Its function is as follows. Possible role could be the docking of the LHC I antenna complex to the core complex. The protein is Photosystem I reaction center subunit VI-2, chloroplastic (PSAH2) of Arabidopsis thaliana (Mouse-ear cress).